Here is a 334-residue protein sequence, read N- to C-terminus: Trans-O-hydroxybenzylidenepyruvate hydratase-aldolase (334 aa).

This sequence belongs to the DapA family.

The enzyme catalyses (3E)-4-(2-hydroxyphenyl)-2-oxobut-3-enoate + H2O = salicylaldehyde + pyruvate. It functions in the pathway aromatic compound metabolism; naphthalene degradation. In terms of biological role, involved in the naphthalene upper catabolic pathway. Catalyzes the transformation of trans-O-hydroxybenzylidenepyruvate (THBPA) to salicylaldehyde and pyruvate. The reaction is reversible. This is Trans-O-hydroxybenzylidenepyruvate hydratase-aldolase (pahE) from Pseudomonas aeruginosa.